A 70-amino-acid polypeptide reads, in one-letter code: ATP synthase subunit c (70 aa).

Transmembrane regions (helical) follow at residues Ile4 to Val24 and Phe47 to Val67.

Belongs to the ATPase C chain family. F-type ATPases have 2 components, F(1) - the catalytic core - and F(0) - the membrane proton channel. F(1) has five subunits: alpha(3), beta(3), gamma(1), delta(1), epsilon(1). F(0) has three main subunits: a(1), b(2) and c(10-14). The alpha and beta chains form an alternating ring which encloses part of the gamma chain. F(1) is attached to F(0) by a central stalk formed by the gamma and epsilon chains, while a peripheral stalk is formed by the delta and b chains.

The protein localises to the cell membrane. F(1)F(0) ATP synthase produces ATP from ADP in the presence of a proton or sodium gradient. F-type ATPases consist of two structural domains, F(1) containing the extramembraneous catalytic core and F(0) containing the membrane proton channel, linked together by a central stalk and a peripheral stalk. During catalysis, ATP synthesis in the catalytic domain of F(1) is coupled via a rotary mechanism of the central stalk subunits to proton translocation. In terms of biological role, key component of the F(0) channel; it plays a direct role in translocation across the membrane. A homomeric c-ring of between 10-14 subunits forms the central stalk rotor element with the F(1) delta and epsilon subunits. The chain is ATP synthase subunit c from Lactiplantibacillus plantarum (strain ATCC BAA-793 / NCIMB 8826 / WCFS1) (Lactobacillus plantarum).